A 570-amino-acid polypeptide reads, in one-letter code: Urease subunit alpha 1 (570 aa).

Residues Gly131 to Phe570 form the Urease domain. 3 residues coordinate Ni(2+): His136, His138, and Lys219. Position 219 is an N6-carboxylysine (Lys219). His221 is a binding site for substrate. Ni(2+)-binding residues include His248 and His274. The active-site Proton donor is His322. Position 362 (Asp362) interacts with Ni(2+).

Belongs to the metallo-dependent hydrolases superfamily. Urease alpha subunit family. In terms of assembly, heterotrimer of UreA (gamma), UreB (beta) and UreC (alpha) subunits. Three heterotrimers associate to form the active enzyme. It depends on Ni cation as a cofactor. Post-translationally, carboxylation allows a single lysine to coordinate two nickel ions.

The protein localises to the cytoplasm. The enzyme catalyses urea + 2 H2O + H(+) = hydrogencarbonate + 2 NH4(+). It participates in nitrogen metabolism; urea degradation; CO(2) and NH(3) from urea (urease route): step 1/1. May protect brucellae during their passage through the stomach. The major route of infection in human brucellosis is oral. In Brucella abortus (strain 2308), this protein is Urease subunit alpha 1.